A 467-amino-acid polypeptide reads, in one-letter code: MAAHGGSAASSALKGLIQQFTAITGASESVGKHMLEACNNNLEMAVTMFLDGGGIAEEPSTSSASVSTVRPHTEEEVRAPIPQKQEILVEPEPLFGVRQEQELRNGGAIDKKLTTLADLFRPPIDLMHKGSFETAKECGQMQNKWLMINIQNVQDFACQCLNRDVWSNEAVKNIIREHFIFWQVYHDSEEGQRYIQFYKLGDFPYVSILDPRTGQKLVEWHQLDVSSFLDQVTGFLGEHGQLDGLSSSPPKKCARSESLIDASEDSQLEAAIRASLQETHFDSAQAKQDSRSDEESESELFSGSEEFISVCGSDEEEEVENLAKSRKSPHKDLGHRKEENRRPLTEPPARTEPGTATNHQGLPSMDSEVLEMSPEKSDGIVEGIDVNGPKAQLMLRYPDGKREQITLPEQAKLLALVKHVQSKGYPNERFELLTNFPRRKLSHLDYDITLQEAGLCPQETVFVQERN.

Position 2 is an N-acetylalanine (Ala2). The 53-residue stretch at 2–54 folds into the UBA domain; that stretch reads AAHGGSAASSALKGLIQQFTAITGASESVGKHMLEACNNNLEMAVTMFLDGGG. The tract at residues 57–77 is disordered; the sequence is EEPSTSSASVSTVRPHTEEEV. Positions 59-70 are enriched in polar residues; the sequence is PSTSSASVSTVR. Residues Lys84 and Lys112 each participate in a glycyl lysine isopeptide (Lys-Gly) (interchain with G-Cter in SUMO2) cross-link. A disordered region spans residues 240–260; it reads GQLDGLSSSPPKKCARSESLI. 4 positions are modified to phosphoserine: Ser256, Ser258, Ser263, and Ser266. The ubiquitin-interacting motif (UIM) repeat unit spans residues 263 to 282; that stretch reads SEDSQLEAAIRASLQETHFD. A disordered region spans residues 281 to 364; the sequence is FDSAQAKQDS…TATNHQGLPS (84 aa). Residues 330-344 are compositionally biased toward basic and acidic residues; the sequence is HKDLGHRKEENRRPL. A Phosphoserine modification is found at Ser373. The region spanning 386 to 463 is the UBX domain; sequence VNGPKAQLML…GLCPQETVFV (78 aa).

In terms of assembly, interacts with neddylated CUL2, ubiquitinated HIF1A, and VCP/p97.

It localises to the nucleus. Ubiquitin-binding adapter that links a subset of NEDD8-associated cullin ring ligases (CRLs) to the segregase VCP/p97, to regulate turnover of their ubiquitination substrates. This is UBX domain-containing protein 7 (Ubxn7) from Mus musculus (Mouse).